Consider the following 132-residue polypeptide: Small ribosomal subunit protein uS8 (132 aa).

This sequence belongs to the universal ribosomal protein uS8 family. Part of the 30S ribosomal subunit. Contacts proteins S5 and S12.

Its function is as follows. One of the primary rRNA binding proteins, it binds directly to 16S rRNA central domain where it helps coordinate assembly of the platform of the 30S subunit. In Clostridium tetani (strain Massachusetts / E88), this protein is Small ribosomal subunit protein uS8.